A 373-amino-acid chain; its full sequence is 3-isopropylmalate dehydrogenase (373 aa).

82-93 (GPKWGTGALRPE) lines the NAD(+) pocket. Residues Arg100, Arg110, Arg139, and Asp231 each coordinate substrate. Residues Asp231, Asp256, and Asp260 each coordinate Mg(2+). Position 295–306 (295–306 (GSAPDLPANKVN)) interacts with NAD(+).

The protein belongs to the isocitrate and isopropylmalate dehydrogenases family. Homodimer. Requires Mg(2+) as cofactor. Mn(2+) serves as cofactor.

The protein resides in the cytoplasm. It catalyses the reaction (2R,3S)-3-isopropylmalate + NAD(+) = 4-methyl-2-oxopentanoate + CO2 + NADH. Its pathway is amino-acid biosynthesis; L-leucine biosynthesis; L-leucine from 3-methyl-2-oxobutanoate: step 3/4. In terms of biological role, catalyzes the oxidation of 3-carboxy-2-hydroxy-4-methylpentanoate (3-isopropylmalate) to 3-carboxy-4-methyl-2-oxopentanoate. The product decarboxylates to 4-methyl-2 oxopentanoate. The sequence is that of 3-isopropylmalate dehydrogenase (LEU2) from Candida maltosa (Yeast).